Reading from the N-terminus, the 359-residue chain is Chondroadherin (359 aa).

The first 22 residues, 1-22, serve as a signal peptide directing secretion; sequence MVRPMLLLSLGLLAGLLPALAA. A disulfide bridge connects residues C23 and C38. An LRRNT domain is found at 23 to 52; that stretch reads CPQNCHCHSDLQHVICDKVGLQKIPKVSEK. LRR repeat units follow at residues 76 to 97, 100 to 121, 124 to 145, 148 to 169, 172 to 193, 196 to 217, 220 to 241, 245 to 266, and 269 to 290; these read NLVS…AFRG, QLIY…AFDD, ELTY…LLSP, NLFI…AFQG, DLRW…ALDD, NLAK…ALSK, VVEE…AFQS, YLET…AFLG, and TLKH…FPFD. S144 carries an O-linked (GalNAc...) serine glycan. One can recognise an LRRCT domain in the interval 300–348; sequence NPWKCTCQLRGLRRWLEAKASRPDATCASPAKFKGQHIRDTDAFRSCKF. 2 disulfide bridges follow: C304–C346 and C306–C326.

The protein belongs to the small leucine-rich proteoglycan (SLRP) family. SLRP class IV subfamily. Mostly monomeric. Interacts with collagen type II. In terms of tissue distribution, present in chondrocytes at all ages.

Its subcellular location is the secreted. It is found in the extracellular space. It localises to the extracellular matrix. In terms of biological role, promotes attachment of chondrocytes, fibroblasts, and osteoblasts. This binding is mediated (at least for chondrocytes and fibroblasts) by the integrin alpha(2)beta(1). May play an important role in the regulation of chondrocyte growth and proliferation. This Homo sapiens (Human) protein is Chondroadherin (CHAD).